Reading from the N-terminus, the 1521-residue chain is uncharacterized protein (1521 aa).

5 disordered regions span residues 1–20 (MENN…NSNN), 85–124 (TFQS…NNNN), 218–254 (ASSP…SSSS), 431–482 (VLNS…TGIT), and 735–797 (NNNN…HQQQ). Low complexity-rich tracts occupy residues 94-108 (NTSS…QNNP), 219-254 (SSPS…SSSS), and 431-454 (VLNS…NNTS). The span at 455–464 (PAIVTSASIH) shows a compositional bias: polar residues. Composition is skewed to low complexity over residues 465–482 (NSNG…TGIT) and 735–762 (NNNN…NNIL). The span at 763 to 774 (SNTLTSSLINEP) shows a compositional bias: polar residues. Over residues 775–788 (NQQHQHQQHQQQNQ) the composition is skewed to low complexity. The stretch at 853-903 (IVNSQQQQQQQQQQQQQQQQQQQQQQQQQQQQQQQQQQQQQQHNNTQNINN) forms a coiled coil. The span at 1398–1453 (QQPLPTSKTSSSSSSTSSEATPYLSSSVPPSIVTSTPSTTPMISSSNPNTSSLPTS) shows a compositional bias: low complexity. The tract at residues 1398–1455 (QQPLPTSKTSSSSSSTSSEATPYLSSSVPPSIVTSTPSTTPMISSSNPNTSSLPTSER) is disordered.

This is an uncharacterized protein from Dictyostelium discoideum (Social amoeba).